A 266-amino-acid chain; its full sequence is Putative carbamate hydrolase RutD (266 aa).

The AB hydrolase-1 domain maps to 15 to 239 (PVVVLSAGLG…RVEMPWGGHA (225 aa)).

This sequence belongs to the AB hydrolase superfamily. Hydrolase RutD family.

It catalyses the reaction carbamate + 2 H(+) = NH4(+) + CO2. Functionally, involved in pyrimidine catabolism. May facilitate the hydrolysis of carbamate, a reaction that can also occur spontaneously. In Klebsiella variicola (strain At-22), this protein is Putative carbamate hydrolase RutD.